Here is a 702-residue protein sequence, read N- to C-terminus: Polyribonucleotide nucleotidyltransferase (702 aa).

2 residues coordinate Mg(2+): Asp-485 and Asp-491. A KH domain is found at Pro-552–Ile-612. An S1 motif domain is found at Gly-622 to Lys-690.

The protein belongs to the polyribonucleotide nucleotidyltransferase family. The cofactor is Mg(2+).

It is found in the cytoplasm. The catalysed reaction is RNA(n+1) + phosphate = RNA(n) + a ribonucleoside 5'-diphosphate. Functionally, involved in mRNA degradation. Catalyzes the phosphorolysis of single-stranded polyribonucleotides processively in the 3'- to 5'-direction. This is Polyribonucleotide nucleotidyltransferase from Clostridium botulinum (strain Loch Maree / Type A3).